Here is a 315-residue protein sequence, read N- to C-terminus: Ninja-family protein 1 (315 aa).

3 disordered regions span residues 1–28 (MASR…AGEA), 68–142 (SLPG…AQEP), and 156–237 (DQGN…TGDL). The segment covering 99 to 108 (ERWRRREMQS) has biased composition (basic and acidic residues). Residues 156-166 (DQGNPSSSMPE) are compositionally biased toward polar residues. Composition is skewed to low complexity over residues 184–197 (SSDN…QNKS) and 221–234 (LRTL…TTST).

This sequence belongs to the Ninja family.

The protein resides in the nucleus. The sequence is that of Ninja-family protein 1 (AFP-A1) from Triticum aestivum (Wheat).